Consider the following 698-residue polypeptide: MNPIVKSFEYGQHTVTLETGVIARQADAAVLASMGDTTVLVTVVGKKVADLSRDFFPLTVNYQEKTYAAGKIPGGFFKREGRPSEDETLIARLIDRPIRPLFPNGFKNEVQVIITVVSVDPQIEPDIISMIGTSAALAISGIPFSGPLGAARVGYINGEYLLNPTVDQLATSSLNLVVAGTKAAVLMVESEAKALAEEIMLGAVTYGHDQQQVVVDAIAEFKAEAGKPTWDWTAPVQDQALVAKIKELAEAGMTDAYQIEVKQDRYVQVGVVKAAAKAALVAENPDVDTREVDNLLGSLEKNVVRSRIIAGKPRIDGREPDMIRALNVLAGVLPRTHGSSLFTRGETQALVTCTLGTERDAQKIDSIMGERTNRFMLHYNFPPYSVGETGMVGSPKRREIGHGKLAWRGMNAVMPTAEEFPYSIRVVSEITESNGSSSMASVCGTSLALMDAGVPIKTSVAGIAMGLVKEGDDFVVLSDILGDEDHLGDMDFKVAGTRDGITALQMDIKIEGITKEIMDIALQQAYGARVHILNVMDQAIGTHRGDISAHAPRITTIKINPEKIRDVIGKGGAVIRALTEETGTTIELDDDGTVKIASSNGEATKEAIRRIEEITAEVEVGRVYNGKVIRIVDFGAFINILPGKDGLVHISQISDERVANVSDHLEMNQDVKVKVMEVDRQGRVRLSIKEAQEKVAAE.

Residues aspartate 485 and aspartate 491 each contribute to the Mg(2+) site. The KH domain maps to 552–611; sequence PRITTIKINPEKIRDVIGKGGAVIRALTEETGTTIELDDDGTVKIASSNGEATKEAIRRI. The S1 motif domain maps to 621–689; sequence GRVYNGKVIR…RQGRVRLSIK (69 aa).

Belongs to the polyribonucleotide nucleotidyltransferase family. Component of the RNA degradosome, which is a multiprotein complex involved in RNA processing and mRNA degradation. Mg(2+) is required as a cofactor.

The protein localises to the cytoplasm. It catalyses the reaction RNA(n+1) + phosphate = RNA(n) + a ribonucleoside 5'-diphosphate. In terms of biological role, involved in mRNA degradation. Catalyzes the phosphorolysis of single-stranded polyribonucleotides processively in the 3'- to 5'-direction. The chain is Polyribonucleotide nucleotidyltransferase from Shewanella denitrificans (strain OS217 / ATCC BAA-1090 / DSM 15013).